An 89-amino-acid chain; its full sequence is Large ribosomal subunit protein bL27 (89 aa).

Positions 1–24 are disordered; sequence MAHKKGTGSTRNGRDSNAKRLGVK.

Belongs to the bacterial ribosomal protein bL27 family.

In Synechococcus sp. (strain JA-2-3B'a(2-13)) (Cyanobacteria bacterium Yellowstone B-Prime), this protein is Large ribosomal subunit protein bL27.